The chain runs to 414 residues: Putative competence-damage inducible protein (414 aa).

Belongs to the CinA family.

This chain is Putative competence-damage inducible protein, found in Limosilactobacillus fermentum (strain NBRC 3956 / LMG 18251) (Lactobacillus fermentum).